A 205-amino-acid chain; its full sequence is CASP-like protein 2A1 (205 aa).

The segment at 1–25 (MDKSKVSTAVGGETPVGLITGSRDD) is disordered. Topologically, residues 1 to 34 (MDKSKVSTAVGGETPVGLITGSRDDELESGSMRT) are cytoplasmic. Residues 35–55 (AETVLRLVPMAFCISALVLML) traverse the membrane as a helical segment. The Extracellular segment spans residues 56-76 (KNSQTNDFGTLSYSDLGAFRY). The chain crosses the membrane as a helical span at residues 77–97 (LVHANGICAGYSLLSAIIVAM). At 98–105 (PRPSTMSR) the chain is on the cytoplasmic side. A helical transmembrane segment spans residues 106 to 126 (AWTFFFLDQVLTYVILAAAAV). Residues 127 to 156 (SVEALYLARKGDIAITWSAACVSFGGFCHK) are Extracellular-facing. The helical transmembrane segment at 157–177 (AITSAVITFIVVVCYALLSLV) threads the bilayer. Residues 178-205 (SSYKLFSRYGAPDVSYPGKGIEVAAFHS) are Cytoplasmic-facing.

Belongs to the Casparian strip membrane proteins (CASP) family. In terms of assembly, homodimer and heterodimers.

The protein localises to the cell membrane. The polypeptide is CASP-like protein 2A1 (Ricinus communis (Castor bean)).